A 101-amino-acid chain; its full sequence is Iron-sulfur cluster assembly protein CyaY (101 aa).

This sequence belongs to the frataxin family.

Involved in iron-sulfur (Fe-S) cluster assembly. May act as a regulator of Fe-S biogenesis. The protein is Iron-sulfur cluster assembly protein CyaY of Haemophilus influenzae (strain 86-028NP).